The chain runs to 278 residues: Large ribosomal subunit protein uL2 (278 aa).

Disordered regions lie at residues 26–57 (RSTPEKSLVRPLHSKGGRNNAGRVTVRHQGGG) and 225–278 (VMNP…NKKR). The segment covering 258–278 (RSPKKASNKYIVRRRKTNKKR) has biased composition (basic residues).

Belongs to the universal ribosomal protein uL2 family. Part of the 50S ribosomal subunit. Forms a bridge to the 30S subunit in the 70S ribosome.

One of the primary rRNA binding proteins. Required for association of the 30S and 50S subunits to form the 70S ribosome, for tRNA binding and peptide bond formation. It has been suggested to have peptidyltransferase activity; this is somewhat controversial. Makes several contacts with the 16S rRNA in the 70S ribosome. This chain is Large ribosomal subunit protein uL2, found in Streptomyces coelicolor (strain ATCC BAA-471 / A3(2) / M145).